Reading from the N-terminus, the 1029-residue chain is Probable E3 ubiquitin protein ligase C167.07c (1029 aa).

One can recognise an IQ domain in the interval 46-75 (AENNSVAVQSLSRGFLARRKFKQDFRERWI). The region spanning 692-1029 (FGKLLKGPIR…VRSGVGFGFS (338 aa)) is the HECT domain. C997 (glycyl thioester intermediate) is an active-site residue.

Its subcellular location is the cytoplasm. It localises to the nucleus. It carries out the reaction S-ubiquitinyl-[E2 ubiquitin-conjugating enzyme]-L-cysteine + [acceptor protein]-L-lysine = [E2 ubiquitin-conjugating enzyme]-L-cysteine + N(6)-ubiquitinyl-[acceptor protein]-L-lysine.. Its function is as follows. Probable E3 ubiquitin-protein ligase which mediates ubiquitination and subsequent proteasomal degradation of target proteins. This is Probable E3 ubiquitin protein ligase C167.07c from Schizosaccharomyces pombe (strain 972 / ATCC 24843) (Fission yeast).